A 125-amino-acid chain; its full sequence is Small ribosomal subunit protein uS13 (125 aa).

The interval 93 to 125 (RKGLPVRGQRTKTNARTRKGPKRTVAGKKKAGR) is disordered.

It belongs to the universal ribosomal protein uS13 family. Part of the 30S ribosomal subunit. Forms a loose heterodimer with protein S19. Forms two bridges to the 50S subunit in the 70S ribosome.

Functionally, located at the top of the head of the 30S subunit, it contacts several helices of the 16S rRNA. In the 70S ribosome it contacts the 23S rRNA (bridge B1a) and protein L5 of the 50S subunit (bridge B1b), connecting the 2 subunits; these bridges are implicated in subunit movement. Contacts the tRNAs in the A and P-sites. The protein is Small ribosomal subunit protein uS13 of Arthrobacter sp. (strain FB24).